A 273-amino-acid chain; its full sequence is 3-methyl-2-oxobutanoate hydroxymethyltransferase (273 aa).

2 residues coordinate Mg(2+): Asp-53 and Asp-92. Residues 53–54 (DS), Asp-92, and Lys-122 each bind 3-methyl-2-oxobutanoate. Glu-124 contributes to the Mg(2+) binding site. The active-site Proton acceptor is the Glu-191.

The protein belongs to the PanB family. Homodecamer; pentamer of dimers. It depends on Mg(2+) as a cofactor.

It localises to the cytoplasm. It catalyses the reaction 3-methyl-2-oxobutanoate + (6R)-5,10-methylene-5,6,7,8-tetrahydrofolate + H2O = 2-dehydropantoate + (6S)-5,6,7,8-tetrahydrofolate. Its pathway is cofactor biosynthesis; (R)-pantothenate biosynthesis; (R)-pantoate from 3-methyl-2-oxobutanoate: step 1/2. In terms of biological role, catalyzes the reversible reaction in which hydroxymethyl group from 5,10-methylenetetrahydrofolate is transferred onto alpha-ketoisovalerate to form ketopantoate. This is 3-methyl-2-oxobutanoate hydroxymethyltransferase from Bacteroides thetaiotaomicron (strain ATCC 29148 / DSM 2079 / JCM 5827 / CCUG 10774 / NCTC 10582 / VPI-5482 / E50).